The primary structure comprises 63 residues: Large ribosomal subunit protein bL28 (63 aa).

The tract at residues M1–N22 is disordered.

This sequence belongs to the bacterial ribosomal protein bL28 family.

This chain is Large ribosomal subunit protein bL28, found in Campylobacter hominis (strain ATCC BAA-381 / DSM 21671 / CCUG 45161 / LMG 19568 / NCTC 13146 / CH001A).